The sequence spans 428 residues: 3-phosphoshikimate 1-carboxyvinyltransferase (428 aa).

3-phosphoshikimate is bound by residues K23, S24, and R28. K23 provides a ligand contact to phosphoenolpyruvate. Residues G97 and R125 each contribute to the phosphoenolpyruvate site. 3-phosphoshikimate contacts are provided by S170, S171, Q172, S198, D314, N337, and K341. Phosphoenolpyruvate is bound at residue Q172. D314 serves as the catalytic Proton acceptor. 3 residues coordinate phosphoenolpyruvate: R345, R387, and K412.

This sequence belongs to the EPSP synthase family. Monomer.

It localises to the cytoplasm. It carries out the reaction 3-phosphoshikimate + phosphoenolpyruvate = 5-O-(1-carboxyvinyl)-3-phosphoshikimate + phosphate. The protein operates within metabolic intermediate biosynthesis; chorismate biosynthesis; chorismate from D-erythrose 4-phosphate and phosphoenolpyruvate: step 6/7. Catalyzes the transfer of the enolpyruvyl moiety of phosphoenolpyruvate (PEP) to the 5-hydroxyl of shikimate-3-phosphate (S3P) to produce enolpyruvyl shikimate-3-phosphate and inorganic phosphate. The sequence is that of 3-phosphoshikimate 1-carboxyvinyltransferase from Yersinia pestis bv. Antiqua (strain Antiqua).